Reading from the N-terminus, the 209-residue chain is Large ribosomal subunit protein uL3 (209 aa).

Positions 133–153 (THGNSLSHRAPGSIGQNQTPG) are disordered. N5-methylglutamine is present on Gln-150.

Belongs to the universal ribosomal protein uL3 family. As to quaternary structure, part of the 50S ribosomal subunit. Forms a cluster with proteins L14 and L19. Methylated by PrmB.

One of the primary rRNA binding proteins, it binds directly near the 3'-end of the 23S rRNA, where it nucleates assembly of the 50S subunit. This chain is Large ribosomal subunit protein uL3, found in Pectobacterium atrosepticum (strain SCRI 1043 / ATCC BAA-672) (Erwinia carotovora subsp. atroseptica).